The primary structure comprises 348 residues: tRNA N6-adenosine threonylcarbamoyltransferase (348 aa).

Residues histidine 114 and histidine 118 each contribute to the Fe cation site. Substrate-binding positions include 137–141 (LVSGG), aspartate 171, glycine 184, aspartate 188, and asparagine 283. Aspartate 311 contacts Fe cation.

Belongs to the KAE1 / TsaD family. The cofactor is Fe(2+).

Its subcellular location is the cytoplasm. The enzyme catalyses L-threonylcarbamoyladenylate + adenosine(37) in tRNA = N(6)-L-threonylcarbamoyladenosine(37) in tRNA + AMP + H(+). In terms of biological role, required for the formation of a threonylcarbamoyl group on adenosine at position 37 (t(6)A37) in tRNAs that read codons beginning with adenine. Is involved in the transfer of the threonylcarbamoyl moiety of threonylcarbamoyl-AMP (TC-AMP) to the N6 group of A37, together with TsaE and TsaB. TsaD likely plays a direct catalytic role in this reaction. The polypeptide is tRNA N6-adenosine threonylcarbamoyltransferase (Nocardioides sp. (strain ATCC BAA-499 / JS614)).